The sequence spans 343 residues: uncharacterized protein (343 aa).

33–40 contributes to the ATP binding site; sequence GPKSSGKS.

It belongs to the archaeal ATPase family.

This is an uncharacterized protein from Methanocaldococcus jannaschii (strain ATCC 43067 / DSM 2661 / JAL-1 / JCM 10045 / NBRC 100440) (Methanococcus jannaschii).